The following is a 499-amino-acid chain: L-arabinose isomerase (499 aa).

Positions 306, 333, 350, and 449 each coordinate Mn(2+).

It belongs to the arabinose isomerase family. Requires Mn(2+) as cofactor.

It carries out the reaction beta-L-arabinopyranose = L-ribulose. Its pathway is carbohydrate degradation; L-arabinose degradation via L-ribulose; D-xylulose 5-phosphate from L-arabinose (bacterial route): step 1/3. Functionally, catalyzes the conversion of L-arabinose to L-ribulose. The chain is L-arabinose isomerase from Aeromonas salmonicida (strain A449).